The following is a 426-amino-acid chain: Serine--tRNA ligase (426 aa).

233–235 (TAE) provides a ligand contact to L-serine. 264–266 (RSE) serves as a coordination point for ATP. E287 serves as a coordination point for L-serine. 351-354 (EISS) contributes to the ATP binding site. S387 is an L-serine binding site.

This sequence belongs to the class-II aminoacyl-tRNA synthetase family. Type-1 seryl-tRNA synthetase subfamily. Homodimer. The tRNA molecule binds across the dimer.

The protein localises to the cytoplasm. It carries out the reaction tRNA(Ser) + L-serine + ATP = L-seryl-tRNA(Ser) + AMP + diphosphate + H(+). The enzyme catalyses tRNA(Sec) + L-serine + ATP = L-seryl-tRNA(Sec) + AMP + diphosphate + H(+). The protein operates within aminoacyl-tRNA biosynthesis; selenocysteinyl-tRNA(Sec) biosynthesis; L-seryl-tRNA(Sec) from L-serine and tRNA(Sec): step 1/1. Its function is as follows. Catalyzes the attachment of serine to tRNA(Ser). Is also able to aminoacylate tRNA(Sec) with serine, to form the misacylated tRNA L-seryl-tRNA(Sec), which will be further converted into selenocysteinyl-tRNA(Sec). The polypeptide is Serine--tRNA ligase (Clostridium botulinum (strain Loch Maree / Type A3)).